The sequence spans 531 residues: Poly(A)-specific ribonuclease PNLDC1 (531 aa).

Mg(2+)-binding residues include Asp28, Glu30, Asp271, and Asp365. The chain crosses the membrane as a helical span at residues 506–526 (ITCLLQVCSIVTTWAMIAFLL).

The protein belongs to the CAF1 family. Requires Mg(2+) as cofactor. As to expression, specifically expressed in embryonic stem cells. Highly expressed in testis.

The protein resides in the endoplasmic reticulum membrane. It carries out the reaction Exonucleolytic cleavage of poly(A) to 5'-AMP.. Functionally, 3'-exoribonuclease that has a preference for poly(A) tails of mRNAs, thereby efficiently degrading poly(A) tails. Exonucleolytic degradation of the poly(A) tail is often the first step in the decay of eukaryotic mRNAs and is also used to silence certain maternal mRNAs translationally during oocyte maturation and early embryonic development. May act as a regulator of multipotency in embryonic stem cells. Is a critical factor for proper spermatogenesis, involved in pre-piRNAs processing to generate mature piRNAs. The polypeptide is Poly(A)-specific ribonuclease PNLDC1 (Mus musculus (Mouse)).